Here is a 174-residue protein sequence, read N- to C-terminus: NADH-quinone oxidoreductase subunit I (174 aa).

4Fe-4S ferredoxin-type domains are found at residues 44-74 (LNRY…VEGD) and 90-119 (RVYQ…MTND). Residues Cys-54, Cys-57, Cys-60, Cys-64, Cys-99, Cys-102, Cys-105, and Cys-109 each coordinate [4Fe-4S] cluster.

This sequence belongs to the complex I 23 kDa subunit family. As to quaternary structure, NDH-1 is composed of 14 different subunits. Subunits NuoA, H, J, K, L, M, N constitute the membrane sector of the complex. Requires [4Fe-4S] cluster as cofactor.

Its subcellular location is the cell membrane. It catalyses the reaction a quinone + NADH + 5 H(+)(in) = a quinol + NAD(+) + 4 H(+)(out). In terms of biological role, NDH-1 shuttles electrons from NADH, via FMN and iron-sulfur (Fe-S) centers, to quinones in the respiratory chain. The immediate electron acceptor for the enzyme in this species is believed to be menaquinone. Couples the redox reaction to proton translocation (for every two electrons transferred, four hydrogen ions are translocated across the cytoplasmic membrane), and thus conserves the redox energy in a proton gradient. The polypeptide is NADH-quinone oxidoreductase subunit I (Mycobacterium sp. (strain KMS)).